We begin with the raw amino-acid sequence, 544 residues long: NEDD4-binding protein 3 (544 aa).

4 disordered regions span residues 61-84 (LPKK…ADYA), 116-252 (SVFK…EFSC), 335-365 (KELR…PEEE), and 430-465 (QEQA…RDSA). A Phosphoserine modification is found at serine 176. Residues 186–222 (PSLSDSSSGGSFGRSPGTGPSPFSSSLGHLNHLGGSL) show a composition bias toward low complexity. The stretch at 294-530 (LAELKRLYVE…LEQELRALRE (237 aa)) forms a coiled coil.

The protein belongs to the N4BP3 family. As to quaternary structure, binds NEDD4. Interacts with 14-3-3 proteins. Interacts with MAVS.

The protein resides in the cytoplasmic vesicle. The protein localises to the cell projection. It localises to the axon. It is found in the dendrite. Plays a positive role in the antiviral innate immune signaling pathway. Mechanistically, interacts with MAVS and functions as a positive regulator to promote 'Lys-63'-linked polyubiquitination of MAVS and thus strengthens the interaction between MAVS and TRAF2. Also plays a role in axon and dendrite arborization during cranial nerve development. May also be important for neural crest migration and early development of other anterior structures including eye, brain and cranial cartilage. This is NEDD4-binding protein 3 (N4BP3) from Homo sapiens (Human).